Consider the following 137-residue polypeptide: Methylglyoxal synthase (137 aa).

Positions 1-137 constitute an MGS-like domain; it reads MKIALIAHDR…NIVHGRDRDA (137 aa). Residues His8, Lys12, 34 to 37, and 54 to 55 contribute to the substrate site; these read TGTT and SG. The Proton donor/acceptor role is filled by Asp60. Position 87 (His87) interacts with substrate.

Belongs to the methylglyoxal synthase family.

The enzyme catalyses dihydroxyacetone phosphate = methylglyoxal + phosphate. In terms of biological role, catalyzes the formation of methylglyoxal from dihydroxyacetone phosphate. The protein is Methylglyoxal synthase of Bacillus licheniformis (strain ATCC 14580 / DSM 13 / JCM 2505 / CCUG 7422 / NBRC 12200 / NCIMB 9375 / NCTC 10341 / NRRL NRS-1264 / Gibson 46).